The chain runs to 384 residues: Glutamate 5-kinase (384 aa).

ATP is bound at residue K24. Substrate-binding residues include S64, D149, and N161. ATP-binding positions include T181–D182 and T223–K229. A PUA domain is found at P288 to T370.

This sequence belongs to the glutamate 5-kinase family.

It localises to the cytoplasm. It carries out the reaction L-glutamate + ATP = L-glutamyl 5-phosphate + ADP. The protein operates within amino-acid biosynthesis; L-proline biosynthesis; L-glutamate 5-semialdehyde from L-glutamate: step 1/2. Catalyzes the transfer of a phosphate group to glutamate to form L-glutamate 5-phosphate. The chain is Glutamate 5-kinase from Xylella fastidiosa (strain 9a5c).